Here is a 175-residue protein sequence, read N- to C-terminus: MLENPLIQQVLFEIMDEDVVGFDVLSVLINTNEVTDDEISRQLDVKLNNIRRILYKLYEARLVDYNREKDEETNWYTYTWKPSLEKVPALVAKKMKNVLKDLKEQLELEETNMFFFCSDCEIKFTFEDAMDSGFRCPQCGGMMYEYDNKKDISILKEQINYLEDEFNKNPLFSAY.

The HTH TFE/IIEalpha-type domain maps to 3–88; it reads ENPLIQQVLF…TWKPSLEKVP (86 aa).

Belongs to the TFE family. As to quaternary structure, monomer. Interaction with RNA polymerase subunits RpoF and RpoE is necessary for Tfe stimulatory transcription activity. Able to interact with Tbp and RNA polymerase in the absence of DNA promoter. Interacts both with the preinitiation and elongation complexes.

In terms of biological role, transcription factor that plays a role in the activation of archaeal genes transcribed by RNA polymerase. Facilitates transcription initiation by enhancing TATA-box recognition by TATA-box-binding protein (Tbp), and transcription factor B (Tfb) and RNA polymerase recruitment. Not absolutely required for transcription in vitro, but particularly important in cases where Tbp or Tfb function is not optimal. It dynamically alters the nucleic acid-binding properties of RNA polymerases by stabilizing the initiation complex and destabilizing elongation complexes. Seems to translocate with the RNA polymerase following initiation and acts by binding to the non template strand of the transcription bubble in elongation complexes. This chain is Transcription factor E, found in Methanococcus maripaludis (strain C7 / ATCC BAA-1331).